We begin with the raw amino-acid sequence, 198 residues long: Segregation and condensation protein B (198 aa).

Belongs to the ScpB family. In terms of assembly, homodimer. Homodimerization may be required to stabilize the binding of ScpA to the Smc head domains. Component of a cohesin-like complex composed of ScpA, ScpB and the Smc homodimer, in which ScpA and ScpB bind to the head domain of Smc. The presence of the three proteins is required for the association of the complex with DNA.

Its subcellular location is the cytoplasm. In terms of biological role, participates in chromosomal partition during cell division. May act via the formation of a condensin-like complex containing Smc and ScpA that pull DNA away from mid-cell into both cell halves. The chain is Segregation and condensation protein B from Acetivibrio thermocellus (strain ATCC 27405 / DSM 1237 / JCM 9322 / NBRC 103400 / NCIMB 10682 / NRRL B-4536 / VPI 7372) (Clostridium thermocellum).